The primary structure comprises 96 residues: MSAVIMQQGDLLLNLYIQPKASRDQIVGLHGDELKVAITAPPIDGKANAHLSKYLAKAFKVPKSDVHILKGELGRHKQVRISAPKNVPAEIATLLE.

Belongs to the UPF0235 family.

The polypeptide is UPF0235 protein Shewmr4_1190 (Shewanella sp. (strain MR-4)).